Here is a 220-residue protein sequence, read N- to C-terminus: Small ribosomal subunit protein eS8 (220 aa).

2 disordered regions span residues 1–41 (MGIS…LSSN) and 131–151 (AKKD…KKSN). Residues 8–26 (MHKRRATGGKQKAWRKKRK) show a composition bias toward basic residues.

It belongs to the eukaryotic ribosomal protein eS8 family.

The sequence is that of Small ribosomal subunit protein eS8 (RPS8) from Oryza sativa subsp. japonica (Rice).